Consider the following 307-residue polypeptide: Ribonuclease Z (307 aa).

Positions 64, 66, 68, 69, 141, 209, and 267 each coordinate Zn(2+). Catalysis depends on D68, which acts as the Proton acceptor.

The protein belongs to the RNase Z family. In terms of assembly, homodimer. It depends on Zn(2+) as a cofactor.

It carries out the reaction Endonucleolytic cleavage of RNA, removing extra 3' nucleotides from tRNA precursor, generating 3' termini of tRNAs. A 3'-hydroxy group is left at the tRNA terminus and a 5'-phosphoryl group is left at the trailer molecule.. Functionally, zinc phosphodiesterase, which displays some tRNA 3'-processing endonuclease activity. Probably involved in tRNA maturation, by removing a 3'-trailer from precursor tRNA. This chain is Ribonuclease Z, found in Thermoplasma acidophilum (strain ATCC 25905 / DSM 1728 / JCM 9062 / NBRC 15155 / AMRC-C165).